Consider the following 574-residue polypeptide: Galactose transporter (574 aa).

The disordered stretch occupies residues M1–P57. Topologically, residues M1–T70 are cytoplasmic. Residues S23 to Y38 show a composition bias toward polar residues. Phosphoserine occurs at positions 32, 35, 39, 48, 50, 53, and 55. The helical transmembrane segment at V71–T91 threads the bilayer. The Extracellular portion of the chain corresponds to I92–T121. Residues G122–G142 form a helical membrane-spanning segment. The Cytoplasmic segment spans residues G143 to K149. Residues K150–I170 form a helical membrane-spanning segment. The Extracellular portion of the chain corresponds to N171 to Q175. The helical transmembrane segment at Y176–M196 threads the bilayer. Over L197–R207 the chain is Cytoplasmic. A helical membrane pass occupies residues G208 to T228. Residues N229 to R242 are Extracellular-facing. A helical transmembrane segment spans residues V243–P263. At E264 to Q342 the chain is on the cytoplasmic side. A helical membrane pass occupies residues L343 to L362. The Extracellular segment spans residues D363 to F366. Residues E367–V387 traverse the membrane as a helical segment. Residues E388–K394 lie on the Cytoplasmic side of the membrane. The chain crosses the membrane as a helical span at residues C395–V415. The Extracellular portion of the chain corresponds to T416 to M435. The chain crosses the membrane as a helical span at residues I436–V456. Over I457–A472 the chain is Cytoplasmic. Residues L473–T493 form a helical membrane-spanning segment. Over S494–Y499 the chain is Extracellular. Residues Y500–P520 form a helical membrane-spanning segment. The Cytoplasmic portion of the chain corresponds to E521–E574.

This sequence belongs to the major facilitator superfamily. Sugar transporter (TC 2.A.1.1) family.

The protein localises to the membrane. In terms of biological role, GAL2 is a facilitated diffusion transporter required for both the high-affinity galactokinase-dependent and low-affinity galactokinase-independent galactose transport processes. This Saccharomyces cerevisiae (strain ATCC 204508 / S288c) (Baker's yeast) protein is Galactose transporter (GAL2).